The following is a 248-amino-acid chain: Protein GrpE (248 aa).

The disordered stretch occupies residues 229-248 (AAPKEDTLPAQENQSSPADS). Positions 238 to 248 (AQENQSSPADS) are enriched in polar residues.

Belongs to the GrpE family. In terms of assembly, homodimer.

The protein localises to the cytoplasm. Participates actively in the response to hyperosmotic and heat shock by preventing the aggregation of stress-denatured proteins, in association with DnaK and GrpE. It is the nucleotide exchange factor for DnaK and may function as a thermosensor. Unfolded proteins bind initially to DnaJ; upon interaction with the DnaJ-bound protein, DnaK hydrolyzes its bound ATP, resulting in the formation of a stable complex. GrpE releases ADP from DnaK; ATP binding to DnaK triggers the release of the substrate protein, thus completing the reaction cycle. Several rounds of ATP-dependent interactions between DnaJ, DnaK and GrpE are required for fully efficient folding. This Trichormus variabilis (strain ATCC 29413 / PCC 7937) (Anabaena variabilis) protein is Protein GrpE.